The following is a 204-amino-acid chain: LexA repressor (204 aa).

Residues Ile30–Lys50 constitute a DNA-binding region (H-T-H motif). Active-site for autocatalytic cleavage activity residues include Ser125 and Lys162.

The protein belongs to the peptidase S24 family. As to quaternary structure, homodimer.

It carries out the reaction Hydrolysis of Ala-|-Gly bond in repressor LexA.. Its function is as follows. Represses a number of genes involved in the response to DNA damage (SOS response), including recA and lexA. In the presence of single-stranded DNA, RecA interacts with LexA causing an autocatalytic cleavage which disrupts the DNA-binding part of LexA, leading to derepression of the SOS regulon and eventually DNA repair. This chain is LexA repressor, found in Carboxydothermus hydrogenoformans (strain ATCC BAA-161 / DSM 6008 / Z-2901).